Here is a 250-residue protein sequence, read N- to C-terminus: Cysteine proteinase inhibitor 12 (250 aa).

An N-terminal signal peptide occupies residues 1–32; the sequence is MRVAATTRPASSSAAAPLPLFLLLAVAAAAAA. 2 consecutive Cystatin domains span residues 49–137 and 156–202; these read GGAH…RNTG and PGWR…AEVV. The Secondary area of contact signature appears at 93-97; that stretch reads QVVAG.

This sequence belongs to the cystatin family. Phytocystatin subfamily.

The protein resides in the secreted. In terms of biological role, specific inhibitor of cysteine proteinases. Probably involved in the regulation of endogenous processes and in defense against pests and pathogens. This Oryza sativa subsp. japonica (Rice) protein is Cysteine proteinase inhibitor 12.